Reading from the N-terminus, the 470-residue chain is MMAAMATARVRMGPRCAQALWRMPWLPVFLSLAAAAAAAAAEQQVPLVLWSSDRDLWAPAADTHEGHITSDLQLSTYLDPALELGPRNVLLFLQDKLSIEDFTAYGGVFGNKQDSAFSNLENALDLAPSSLVLPAVDWYAVSTLTTYLQEKLGASPLHVDLATLRELKLNASLPALLLIRLPYTASSGLMAPREVLTGNDEVIGQVLSTLKSEDVPYTAALTAVRPSRVARDVAVVAGGLGRQLLQKQPVSPVIHPPVSYNDTAPRILFWAQNFSVAYKDQWEDLTPLTFGVQELNLTGSFWNDSFARLSLTYERLFGTTVTFKFILANRLYPVSARHWFTMERLEVHSNGSVAYFNASQVTGPSIYSFHCEYVSSLSKKGSLLVARTQPSPWQMMLQDFQIQAFNVMGEQFSYASDCASFFSPGIWMGLLTSLFMLFIFTYGLHMILSLKTMDRFDDHKGPTISLTQIV.

Residues 1 to 41 form the signal peptide; that stretch reads MMAAMATARVRMGPRCAQALWRMPWLPVFLSLAAAAAAAAA. Residues 42–231 constitute a propeptide that is removed on maturation; the sequence is EQQVPLVLWS…TAVRPSRVAR (190 aa). Topologically, residues 42-419 are lumenal; sequence EQQVPLVLWS…EQFSYASDCA (378 aa). Asparagine 170, asparagine 261, asparagine 273, asparagine 296, asparagine 303, asparagine 350, and asparagine 357 each carry an N-linked (GlcNAc...) asparagine glycan. Cysteines 371 and 418 form a disulfide. A helical membrane pass occupies residues 420-440; it reads SFFSPGIWMGLLTSLFMLFIF. Topologically, residues 441–470 are cytoplasmic; sequence TYGLHMILSLKTMDRFDDHKGPTISLTQIV. Phosphoserine is present on serine 465.

Belongs to the vacuolar ATPase subunit S1 family. As to quaternary structure, accessory component of the multisubunit proton-transporting vacuolar (V)-ATPase protein pump. Interacts (via N-terminus) with ATP6AP2 (via N-terminus). Interacts with RNASEK. Interacts with TMEM106B (via C-terminus). In terms of processing, N-glycosylated. Widely expressed, with highest levels in brain and lowest in liver and duodenum.

The protein resides in the endoplasmic reticulum membrane. Its subcellular location is the endoplasmic reticulum-Golgi intermediate compartment membrane. The protein localises to the cytoplasmic vesicle. It is found in the secretory vesicle. It localises to the synaptic vesicle membrane. The protein resides in the clathrin-coated vesicle membrane. Its function is as follows. Accessory subunit of the proton-transporting vacuolar (V)-ATPase protein pump, which is required for luminal acidification of secretory vesicles. Guides the V-type ATPase into specialized subcellular compartments, such as neuroendocrine regulated secretory vesicles or the ruffled border of the osteoclast, thereby regulating its activity. Involved in membrane trafficking and Ca(2+)-dependent membrane fusion. May play a role in the assembly of the V-type ATPase complex. In aerobic conditions, involved in intracellular iron homeostasis, thus triggering the activity of Fe(2+) prolyl hydroxylase (PHD) enzymes, and leading to HIF1A hydroxylation and subsequent proteasomal degradation. In islets of Langerhans cells, may regulate the acidification of dense-core secretory granules. The sequence is that of V-type proton ATPase subunit S1 (ATP6AP1) from Homo sapiens (Human).